The following is a 201-amino-acid chain: Probable GTP-binding protein EngB (201 aa).

The EngB-type G domain maps to 23–196; it reads TGPEIALAGR…HEAVEEILSM (174 aa). GTP contacts are provided by residues 31-38, 58-62, 76-79, 143-146, and 175-177; these read GRSNVGKS, GKTQM, DLPG, TKAD, and YSA. Residues serine 38 and threonine 60 each coordinate Mg(2+).

The protein belongs to the TRAFAC class TrmE-Era-EngA-EngB-Septin-like GTPase superfamily. EngB GTPase family. Mg(2+) serves as cofactor.

Functionally, necessary for normal cell division and for the maintenance of normal septation. This Desulfitobacterium hafniense (strain DSM 10664 / DCB-2) protein is Probable GTP-binding protein EngB.